The sequence spans 342 residues: Ketol-acid reductoisomerase (NADP(+)) (342 aa).

The KARI N-terminal Rossmann domain occupies 2–181 (VKVYYNGDIK…GGARAGVLET (180 aa)). NADP(+) contacts are provided by residues 25–28 (YGSQ), arginine 48, serine 52, and 82–85 (DEQQ). Histidine 107 is a catalytic residue. Residue glycine 133 participates in NADP(+) binding. The KARI C-terminal knotted domain occupies 182–327 (TFKEETETDL…RKLREMMPFV (146 aa)). Mg(2+) is bound by residues aspartate 190, glutamate 194, glutamate 226, and glutamate 230. Serine 251 is a substrate binding site.

Belongs to the ketol-acid reductoisomerase family. Mg(2+) is required as a cofactor.

It catalyses the reaction (2R)-2,3-dihydroxy-3-methylbutanoate + NADP(+) = (2S)-2-acetolactate + NADPH + H(+). The catalysed reaction is (2R,3R)-2,3-dihydroxy-3-methylpentanoate + NADP(+) = (S)-2-ethyl-2-hydroxy-3-oxobutanoate + NADPH + H(+). It participates in amino-acid biosynthesis; L-isoleucine biosynthesis; L-isoleucine from 2-oxobutanoate: step 2/4. The protein operates within amino-acid biosynthesis; L-valine biosynthesis; L-valine from pyruvate: step 2/4. In terms of biological role, involved in the biosynthesis of branched-chain amino acids (BCAA). Catalyzes an alkyl-migration followed by a ketol-acid reduction of (S)-2-acetolactate (S2AL) to yield (R)-2,3-dihydroxy-isovalerate. In the isomerase reaction, S2AL is rearranged via a Mg-dependent methyl migration to produce 3-hydroxy-3-methyl-2-ketobutyrate (HMKB). In the reductase reaction, this 2-ketoacid undergoes a metal-dependent reduction by NADPH to yield (R)-2,3-dihydroxy-isovalerate. This is Ketol-acid reductoisomerase (NADP(+)) from Bacillus subtilis (strain 168).